Consider the following 101-residue polypeptide: Small ribosomal subunit protein uS14 (101 aa).

The protein belongs to the universal ribosomal protein uS14 family. Part of the 30S ribosomal subunit. Contacts proteins S3 and S10.

Binds 16S rRNA, required for the assembly of 30S particles and may also be responsible for determining the conformation of the 16S rRNA at the A site. In Neisseria meningitidis serogroup C / serotype 2a (strain ATCC 700532 / DSM 15464 / FAM18), this protein is Small ribosomal subunit protein uS14.